The sequence spans 365 residues: tRNA/tmRNA (uracil-C(5))-methyltransferase (365 aa).

Residues Gln-189, Tyr-217, Asn-222, Glu-238, and Asp-298 each contribute to the S-adenosyl-L-methionine site. The Nucleophile role is filled by Cys-323. The active-site Proton acceptor is Glu-357.

Belongs to the class I-like SAM-binding methyltransferase superfamily. RNA M5U methyltransferase family. TrmA subfamily.

It carries out the reaction uridine(54) in tRNA + S-adenosyl-L-methionine = 5-methyluridine(54) in tRNA + S-adenosyl-L-homocysteine + H(+). The catalysed reaction is uridine(341) in tmRNA + S-adenosyl-L-methionine = 5-methyluridine(341) in tmRNA + S-adenosyl-L-homocysteine + H(+). Its function is as follows. Dual-specificity methyltransferase that catalyzes the formation of 5-methyluridine at position 54 (m5U54) in all tRNAs, and that of position 341 (m5U341) in tmRNA (transfer-mRNA). The sequence is that of tRNA/tmRNA (uracil-C(5))-methyltransferase from Shewanella piezotolerans (strain WP3 / JCM 13877).